A 121-amino-acid polypeptide reads, in one-letter code: Phosphoribosyl-AMP cyclohydrolase (121 aa).

Aspartate 76 contributes to the Mg(2+) binding site. Cysteine 77 provides a ligand contact to Zn(2+). Positions 78 and 80 each coordinate Mg(2+). Cysteine 93 and cysteine 100 together coordinate Zn(2+).

It belongs to the PRA-CH family. As to quaternary structure, homodimer. Mg(2+) is required as a cofactor. Requires Zn(2+) as cofactor.

It is found in the cytoplasm. It carries out the reaction 1-(5-phospho-beta-D-ribosyl)-5'-AMP + H2O = 1-(5-phospho-beta-D-ribosyl)-5-[(5-phospho-beta-D-ribosylamino)methylideneamino]imidazole-4-carboxamide. It participates in amino-acid biosynthesis; L-histidine biosynthesis; L-histidine from 5-phospho-alpha-D-ribose 1-diphosphate: step 3/9. In terms of biological role, catalyzes the hydrolysis of the adenine ring of phosphoribosyl-AMP. This chain is Phosphoribosyl-AMP cyclohydrolase, found in Paracoccus denitrificans (strain Pd 1222).